A 508-amino-acid polypeptide reads, in one-letter code: Monocarboxylate transporter 9 (508 aa).

6 consecutive transmembrane segments (helical) span residues 13–33 (WVIV…PLAV), 53–73 (WVGS…SLFV), 80–100 (PVTI…SLAP), 102–122 (IYFL…LLYT), 137–157 (GLAL…YAAL), and 164–184 (FYGL…ILAC). A disordered region spans residues 242–263 (GDWGRETSLPKNPTGAAHTKEP). The next 6 helical transmembrane spans lie at 303–323 (VFSA…PPSL), 341–361 (IPLI…LGIL), 370–390 (LYLY…IPLA), 396–416 (LAIL…FPYV), 431–451 (GILM…VGWF), and 460–480 (IAFY…LLAI).

The protein belongs to the major facilitator superfamily. Monocarboxylate porter (TC 2.A.1.13) family. In terms of tissue distribution, expressed in the liver and kidneys. In the liver localizes on the sinusoidal membrane of the hepatocytes.

Its subcellular location is the cell membrane. It carries out the reaction creatine(in) = creatine(out). It catalyses the reaction (R)-carnitine(in) = (R)-carnitine(out). Extracellular pH-and Na(+)-sensitive low-affinity creatine transporter. Also functions as a pH-independent carnitine efflux transporter. This Rattus norvegicus (Rat) protein is Monocarboxylate transporter 9 (Slc16a9).